The primary structure comprises 643 residues: MMFIPATLGTFVLASLLPATVGAGIPNAAADVAVRALPNAPDGYAPAEVDCPSTKPAVRSAAKLSQQEQDWLKKRRMKTTGAMADFFSRVKIEGFDAVAYLVGNADNVAKLPNVAIAVSGGGYRALMNGAGALKAFDSRTDNSTEPGQLGGLLQSATYLSGLSGGGWLLGSMYVNNDSTITELQKGGSNSLWKFNRSILEGPDDGSSGVVDTAEYYKEMIKEISRKKAAGFETSITDIWGRALSYQLINAPKGGPAYTWSSISQNSKFQSGDVPFPLLVADGRNPGEKLIGGNATIFEFNPYEFGTWDPTIFGFVPTQYIGSKFEAGTLPSDEKCVRGMDNAGFIMGTSSSLFNQFALHLDSQDLPKVVKDSLRDFLSSLDEANNDIAEYKPNPFFGYAKSTSPFAGVKSLPVVDGGEDKQNIPFHPLIQPARHVDVIFAIDSSADTELAWPNGDSIIATYQRSLNSTGIANGTSFPAIPDNNTFINLGLNHNPTFFGCDSSNTTNPTPLIVYIPNSPYVTHSNVSTFNLKYNTTQRDAIILNGYNVATMANATRDGNWPTCVGCAMLSRSLERTKTAVPDACKQCFKMYCWDGTLNSTKPDVYDPKLFLTEVDLQSAAKGLHASGKLSLVAAVVTLLSILLV.

Residues methionine 1–glycine 22 form the signal peptide. In terms of domain architecture, PLA2c spans aspartate 50 to asparagine 597. Asparagine 142, asparagine 176, asparagine 195, asparagine 293, asparagine 466, asparagine 472, asparagine 482, asparagine 503, asparagine 524, asparagine 533, asparagine 552, and asparagine 597 each carry an N-linked (GlcNAc...) asparagine glycan.

The protein belongs to the lysophospholipase family.

It is found in the secreted. It catalyses the reaction a 1-acyl-sn-glycero-3-phosphocholine + H2O = sn-glycerol 3-phosphocholine + a fatty acid + H(+). Its function is as follows. Catalyzes the release of fatty acids from lysophospholipids. Phospholipase B may well contribute to pathogenicity by abetting the fungus in damaging host cell membranes. The protein is Lysophospholipase ARB_05919 of Arthroderma benhamiae (strain ATCC MYA-4681 / CBS 112371) (Trichophyton mentagrophytes).